A 288-amino-acid polypeptide reads, in one-letter code: Quinate/shikimate dehydrogenase (288 aa).

Substrate contacts are provided by Lys-71 and Asp-107. Residues 132–135, 155–158, Lys-205, 232–235, and Gly-255 contribute to the NAD(+) site; these read AGGA, NRRD, and CVYN.

Belongs to the shikimate dehydrogenase family. As to quaternary structure, homodimer.

The catalysed reaction is L-quinate + NAD(+) = 3-dehydroquinate + NADH + H(+). It carries out the reaction L-quinate + NADP(+) = 3-dehydroquinate + NADPH + H(+). It catalyses the reaction shikimate + NADP(+) = 3-dehydroshikimate + NADPH + H(+). The enzyme catalyses shikimate + NAD(+) = 3-dehydroshikimate + NADH + H(+). Its pathway is metabolic intermediate biosynthesis; chorismate biosynthesis; chorismate from D-erythrose 4-phosphate and phosphoenolpyruvate: step 4/7. In terms of biological role, the actual biological function of YdiB remains unclear, nor is it known whether 3-dehydroshikimate or quinate represents the natural substrate. Catalyzes the reversible NAD-dependent reduction of both 3-dehydroshikimate (DHSA) and 3-dehydroquinate to yield shikimate (SA) and quinate, respectively. It can use both NAD or NADP for catalysis, however it has higher catalytic efficiency with NAD. The protein is Quinate/shikimate dehydrogenase of Shigella sonnei (strain Ss046).